A 1026-amino-acid chain; its full sequence is Beta-galactosidase (1026 aa).

Glu-458 functions as the Proton donor in the catalytic mechanism. The active-site Nucleophile is Glu-546.

The protein belongs to the glycosyl hydrolase 2 family.

It carries out the reaction Hydrolysis of terminal non-reducing beta-D-galactose residues in beta-D-galactosides.. This Streptococcus thermophilus protein is Beta-galactosidase (lacZ).